Consider the following 281-residue polypeptide: Proteasome subunit beta (281 aa).

A propeptide spans 1–53 (removed in mature form; by autocatalysis); the sequence is MEANTRSTGRLPAAFLTPGSSSFMDFLSDHQPELLPGKRQLPPTQGVIEAPHG. Catalysis depends on T54, which acts as the Nucleophile.

It belongs to the peptidase T1B family. The 20S proteasome core is composed of 14 alpha and 14 beta subunits that assemble into four stacked heptameric rings, resulting in a barrel-shaped structure. The two inner rings, each composed of seven catalytic beta subunits, are sandwiched by two outer rings, each composed of seven alpha subunits. The catalytic chamber with the active sites is on the inside of the barrel. Has a gated structure, the ends of the cylinder being occluded by the N-termini of the alpha-subunits. Is capped by the proteasome-associated ATPase, ARC.

It is found in the cytoplasm. It catalyses the reaction Cleavage of peptide bonds with very broad specificity.. It functions in the pathway protein degradation; proteasomal Pup-dependent pathway. With respect to regulation, the formation of the proteasomal ATPase ARC-20S proteasome complex, likely via the docking of the C-termini of ARC into the intersubunit pockets in the alpha-rings, may trigger opening of the gate for substrate entry. Interconversion between the open-gate and close-gate conformations leads to a dynamic regulation of the 20S proteasome proteolysis activity. Component of the proteasome core, a large protease complex with broad specificity involved in protein degradation. This chain is Proteasome subunit beta, found in Streptomyces scabiei (strain 87.22).